A 342-amino-acid chain; its full sequence is Protein-ribulosamine 3-kinase, chloroplastic (342 aa).

A chloroplast-targeting transit peptide spans 1-46 (MANVALLSAASPSTSSAAPRLRHVARRRPSRRSACPRSAASRLSIM). Position 141–143 (141–143 (EFI)) interacts with ATP. Asp246 acts as the Proton acceptor in catalysis.

Belongs to the fructosamine kinase family.

It is found in the plastid. Its subcellular location is the chloroplast. It catalyses the reaction N(6)-D-ribulosyl-L-lysyl-[protein] + ATP = N(6)-(3-O-phospho-D-ribulosyl)-L-lysyl-[protein] + ADP + H(+). It carries out the reaction N(6)-(D-erythrulosyl)-L-lysyl-[protein] + ATP = N(6)-(3-O-phospho-D-erythrulosyl)-L-lysyl-[protein] + ADP + H(+). Functionally, initiates a process leading to the deglycation of proteins. Phosphorylates low-molecular-mass and protein-bound erythrulosamines and ribulosamines, but not fructosamines or psicosamines, on the third carbon of the sugar moiety. Protein-bound erythrulosamine 3-phosphates and ribulosamine 3-phosphates are unstable and decompose under physiological conditions. In Oryza sativa subsp. indica (Rice), this protein is Protein-ribulosamine 3-kinase, chloroplastic.